Reading from the N-terminus, the 357-residue chain is COP9 signalosome complex subunit 5a (357 aa).

Position 1 is an N-acetylmethionine (M1). An MPN domain is found at 59 to 196 (VHISALALLK…IGAFRTYPEG (138 aa)). Positions 142, 144, and 155 each coordinate Zn(2+). The JAMM motif signature appears at 142–155 (HSHPGYGCWLSGID). The segment at 338 to 357 (ARQSKKSADDSSDPEPMITS) is disordered.

It belongs to the peptidase M67A family. CSN5 subfamily. In terms of assembly, component of the CSN complex, probably composed of CSN1, CSN2, CSN3, CSN4, CSN5 (CSN5A or CSN5B), CSN6 (CSN6A or CSN6B), CSN7 and CSN8. CSN5A or CSN5B are present within distinct CSN complexes each containing only one copy of CSN5. Interacts with itself. In the complex, it is located in the center and probably interacts directly with CSN4 and CSN6A or CSN6B. Present also in subcomplex forms which inculdes CSN3. Also exists as monomeric form. Interacts with CYT1 in vitro, but not in planta. It depends on a divalent metal cation as a cofactor. Ubiquitously expressed. Highly expressed in flowers and roots. Expressed at lower level in seedlings and siliques.

It localises to the cytoplasm. Its subcellular location is the nucleus. Probable protease subunit of the COP9 signalosome complex (CSN), a complex involved in various cellular and developmental processes such as photomorphogenesis and auxin and jasmonate responses. The CSN complex is an essential regulator of the ubiquitin (Ubl) conjugation pathway by mediating the deneddylation of the cullin subunits of the SCF-type E3 ligase complexes, leading to decrease the Ubl ligase activity of SCF. In the complex, it probably acts as the catalytic center that mediates the cleavage of Nedd8 from cullins. It however has no metalloprotease activity by itself and requires the other subunits of the CSN complex. The CSN complex is involved in repression of photomorphogenesis in darkness by regulating the activity of COP1-containing Ubl ligase complexes. The complex is also required for degradation of PSIAA6 by regulating the activity of the Ubl ligase SCF-TIR complex. Involved in CSN's deneddylation/derubylation activity. Required for the deneddylation of all cullins. Essential for the structural integrity of the CSN holocomplex. The sequence is that of COP9 signalosome complex subunit 5a from Arabidopsis thaliana (Mouse-ear cress).